The primary structure comprises 426 residues: Protein trichome birefringence-like 19 (426 aa).

The helical; Signal-anchor for type II membrane protein transmembrane segment at L15–L35 threads the bilayer. Residues G142–S144 carry the GDS motif motif. Residues D388 to N402 carry the DCXHWCLPGXXDXWN motif motif.

The protein belongs to the PC-esterase family. TBL subfamily.

The protein resides in the membrane. May act as a bridging protein that binds pectin and other cell wall polysaccharides. Probably involved in maintaining esterification of pectins. May be involved in the specific O-acetylation of cell wall polymers. The chain is Protein trichome birefringence-like 19 (TBL19) from Arabidopsis thaliana (Mouse-ear cress).